The primary structure comprises 245 residues: Phosphoribosylaminoimidazole-succinocarboxamide synthase (245 aa).

This sequence belongs to the SAICAR synthetase family.

It carries out the reaction 5-amino-1-(5-phospho-D-ribosyl)imidazole-4-carboxylate + L-aspartate + ATP = (2S)-2-[5-amino-1-(5-phospho-beta-D-ribosyl)imidazole-4-carboxamido]succinate + ADP + phosphate + 2 H(+). Its pathway is purine metabolism; IMP biosynthesis via de novo pathway; 5-amino-1-(5-phospho-D-ribosyl)imidazole-4-carboxamide from 5-amino-1-(5-phospho-D-ribosyl)imidazole-4-carboxylate: step 1/2. This is Phosphoribosylaminoimidazole-succinocarboxamide synthase from Nostoc sp. (strain PCC 7120 / SAG 25.82 / UTEX 2576).